The primary structure comprises 279 residues: tRNA dimethylallyltransferase (279 aa).

ATP is bound at residue 10 to 17; the sequence is GPTASGKS. 12 to 17 contacts substrate; the sequence is TASGKS.

This sequence belongs to the IPP transferase family. Monomer. It depends on Mg(2+) as a cofactor.

It catalyses the reaction adenosine(37) in tRNA + dimethylallyl diphosphate = N(6)-dimethylallyladenosine(37) in tRNA + diphosphate. Catalyzes the transfer of a dimethylallyl group onto the adenine at position 37 in tRNAs that read codons beginning with uridine, leading to the formation of N6-(dimethylallyl)adenosine (i(6)A). This chain is tRNA dimethylallyltransferase, found in Roseobacter denitrificans (strain ATCC 33942 / OCh 114) (Erythrobacter sp. (strain OCh 114)).